The following is a 244-amino-acid chain: Probable transcriptional regulatory protein DR_2548 (244 aa).

A disordered region spans residues 1-23 (MAGHSKWAQIKRKKGANDKKRSA).

Belongs to the TACO1 family.

Its subcellular location is the cytoplasm. The polypeptide is Probable transcriptional regulatory protein DR_2548 (Deinococcus radiodurans (strain ATCC 13939 / DSM 20539 / JCM 16871 / CCUG 27074 / LMG 4051 / NBRC 15346 / NCIMB 9279 / VKM B-1422 / R1)).